The sequence spans 242 residues: Type III pantothenate kinase (242 aa).

ATP is bound at residue 7-14; sequence DLGNSRFK. Residues Tyr-91 and 98–101 each bind substrate; that span reads GVDR. The active-site Proton acceptor is the Asp-100. Thr-121 contacts ATP. Thr-171 contacts substrate.

It belongs to the type III pantothenate kinase family. Homodimer. NH4(+) serves as cofactor. The cofactor is K(+).

The protein resides in the cytoplasm. The catalysed reaction is (R)-pantothenate + ATP = (R)-4'-phosphopantothenate + ADP + H(+). It participates in cofactor biosynthesis; coenzyme A biosynthesis; CoA from (R)-pantothenate: step 1/5. Catalyzes the phosphorylation of pantothenate (Pan), the first step in CoA biosynthesis. The protein is Type III pantothenate kinase of Xanthomonas campestris pv. campestris (strain B100).